A 2137-amino-acid polypeptide reads, in one-letter code: Pecanex-like protein 2 (2137 aa).

2 consecutive transmembrane segments (helical) span residues Cys-34 to Pro-54 and Ala-57 to Val-77. Disordered stretches follow at residues Gln-92 to Ser-163, Asn-225 to Gly-251, Glu-402 to Val-530, and Ser-545 to Asn-572. The segment covering Ser-96–Thr-114 has biased composition (basic and acidic residues). The span at His-116 to Ile-125 shows a compositional bias: polar residues. Asn-136 carries N-linked (GlcNAc...) asparagine glycosylation. The segment covering Ser-146–Ser-156 has biased composition (polar residues). A glycan (N-linked (GlcNAc...) asparagine) is linked at Asn-449. Residues Ile-479–Trp-490 show a composition bias toward basic and acidic residues. The segment covering Gly-510 to Lys-520 has biased composition (polar residues). N-linked (GlcNAc...) asparagine glycosylation is found at Asn-550, Asn-572, Asn-587, Asn-598, and Asn-613. The segment covering Ala-593 to Glu-602 has biased composition (polar residues). The disordered stretch occupies residues Ala-593–Asp-612. 2 disordered regions span residues Glu-621–Pro-655 and Ala-740–Pro-763. The span at Gly-630–Pro-655 shows a compositional bias: polar residues. The span at Ser-746–Ser-760 shows a compositional bias: low complexity. Transmembrane regions (helical) follow at residues Leu-844 to Phe-864, Met-868 to Val-888, Gln-901 to Leu-921, Tyr-952 to Ile-972, Ile-983 to Val-1003, His-1029 to Ser-1049, Leu-1099 to Leu-1119, Phe-1124 to Leu-1144, Tyr-1193 to Asn-1213, Ser-1237 to Phe-1257, Ser-1265 to His-1285, Gly-1302 to Phe-1322, and Thr-1324 to Ile-1344. 3 N-linked (GlcNAc...) asparagine glycosylation sites follow: Asn-1412, Asn-1553, and Asn-1818. Residues Arg-1876 to Pro-1958 form a disordered region. Polar residues-rich tracts occupy residues Ser-1901–Glu-1910, Gly-1920–Arg-1929, and Ser-1937–Pro-1958. N-linked (GlcNAc...) asparagine glycosylation is present at Asn-2054.

The protein belongs to the pecanex family.

Its subcellular location is the membrane. In terms of biological role, may play a role in tumorigenesis of colorectal carcinomas with high microsatellite instability (MSI-H). The sequence is that of Pecanex-like protein 2 from Homo sapiens (Human).